Reading from the N-terminus, the 403-residue chain is Lissencephaly-1 homolog 1 (403 aa).

Positions 7–38 constitute a LisH domain; that stretch reads QRDELNQAIHQYLLISYQQSAQLFKTEAAVKD. The stretch at 51–87 forms a coiled coil; sequence NSIVRLSKRVITLEQQVEQLNEQLAQAQAGKIQFNKS. WD repeat units lie at residues 103 to 142, 145 to 184, 187 to 226, 229 to 270, 271 to 327, 330 to 369, and 373 to 403; these read GHRA…FEKT, GHTS…CVKT, GHEH…CKKT, EHQE…HQLS, GHEH…NLFT, GHDN…QKKK, and AHDK…WLLS.

The protein belongs to the WD repeat LIS1/nudF family.

It is found in the cytoplasm. It localises to the cytoskeleton. The protein resides in the microtubule organizing center. Its subcellular location is the centrosome. Functionally, positively regulates the activity of the minus-end directed microtubule motor protein dynein. May enhance dynein-mediated microtubule sliding by targeting dynein to the microtubule plus end. Required for several dynein- and microtubule-dependent processes. The chain is Lissencephaly-1 homolog 1 from Paramecium tetraurelia.